Here is a 202-residue protein sequence, read N- to C-terminus: Dephospho-CoA kinase (202 aa).

The 197-residue stretch at 6–202 (KVSITGDLSS…EYFYALKGAL (197 aa)) folds into the DPCK domain. Residue 14-19 (SSGKTE) coordinates ATP.

The protein belongs to the CoaE family.

It localises to the cytoplasm. The enzyme catalyses 3'-dephospho-CoA + ATP = ADP + CoA + H(+). It participates in cofactor biosynthesis; coenzyme A biosynthesis; CoA from (R)-pantothenate: step 5/5. In terms of biological role, catalyzes the phosphorylation of the 3'-hydroxyl group of dephosphocoenzyme A to form coenzyme A. The protein is Dephospho-CoA kinase of Chlamydia pneumoniae (Chlamydophila pneumoniae).